The primary structure comprises 144 residues: Protein cornichon homolog 1 (144 aa).

Residues 1–10 (MAFTFAAFCY) are Cytoplasmic-facing. A helical transmembrane segment spans residues 11–31 (MLALLLTAALIFFAIWHIIAF). Topologically, residues 32 to 56 (DELKTDYKNPIDQCNTLNPLVLPEY) are lumenal. Residues 57-77 (LIHAFFCVMFLCAAEWLTLGL) form a helical membrane-spanning segment. The Cytoplasmic segment spans residues 78-122 (NMPLLAYHIWRYMSRPVMSGPGLYDPTTIMNADILAYCQKEGWCK). Residues 123–143 (LAFYLLAFFYYLYGMIYVLVS) form a helical membrane-spanning segment. Position 144 (serine 144) is a topological domain, lumenal.

It belongs to the cornichon family. Interacts with AREG immature precursor and with immature TGFA, i.e. with a prosegment and lacking full N-glycosylation, but not with the fully N-glycosylated form. In the Golgi apparatus, may form a complex with GORASP55 and transmembrane TGFA.

It localises to the endoplasmic reticulum membrane. It is found in the golgi apparatus membrane. Involved in the selective transport and maturation of TGF-alpha family proteins. The chain is Protein cornichon homolog 1 (CNIH1) from Bos taurus (Bovine).